Consider the following 179-residue polypeptide: Peptide deformylase 2 (179 aa).

The Fe cation site is built by Cys-101 and His-143. Residue Glu-144 is part of the active site. Position 147 (His-147) interacts with Fe cation.

This sequence belongs to the polypeptide deformylase family. Requires Fe(2+) as cofactor.

The catalysed reaction is N-terminal N-formyl-L-methionyl-[peptide] + H2O = N-terminal L-methionyl-[peptide] + formate. Functionally, removes the formyl group from the N-terminal Met of newly synthesized proteins. Requires at least a dipeptide for an efficient rate of reaction. N-terminal L-methionine is a prerequisite for activity but the enzyme has broad specificity at other positions. In Pseudomonas syringae pv. tomato (strain ATCC BAA-871 / DC3000), this protein is Peptide deformylase 2.